Here is a 227-residue protein sequence, read N- to C-terminus: Phosphoribosylformylglycinamidine synthase subunit PurQ (227 aa).

Positions 2–226 (KFAVIQFPGS…VQAWKEEQVN (225 aa)) constitute a Glutamine amidotransferase type-1 domain. The Nucleophile role is filled by Cys86. Residues His195 and Glu197 contribute to the active site.

As to quaternary structure, part of the FGAM synthase complex composed of 1 PurL, 1 PurQ and 2 PurS subunits.

Its subcellular location is the cytoplasm. The enzyme catalyses N(2)-formyl-N(1)-(5-phospho-beta-D-ribosyl)glycinamide + L-glutamine + ATP + H2O = 2-formamido-N(1)-(5-O-phospho-beta-D-ribosyl)acetamidine + L-glutamate + ADP + phosphate + H(+). It catalyses the reaction L-glutamine + H2O = L-glutamate + NH4(+). The protein operates within purine metabolism; IMP biosynthesis via de novo pathway; 5-amino-1-(5-phospho-D-ribosyl)imidazole from N(2)-formyl-N(1)-(5-phospho-D-ribosyl)glycinamide: step 1/2. In terms of biological role, part of the phosphoribosylformylglycinamidine synthase complex involved in the purines biosynthetic pathway. Catalyzes the ATP-dependent conversion of formylglycinamide ribonucleotide (FGAR) and glutamine to yield formylglycinamidine ribonucleotide (FGAM) and glutamate. The FGAM synthase complex is composed of three subunits. PurQ produces an ammonia molecule by converting glutamine to glutamate. PurL transfers the ammonia molecule to FGAR to form FGAM in an ATP-dependent manner. PurS interacts with PurQ and PurL and is thought to assist in the transfer of the ammonia molecule from PurQ to PurL. This Listeria welshimeri serovar 6b (strain ATCC 35897 / DSM 20650 / CCUG 15529 / CIP 8149 / NCTC 11857 / SLCC 5334 / V8) protein is Phosphoribosylformylglycinamidine synthase subunit PurQ.